We begin with the raw amino-acid sequence, 88 residues long: Hemotin (88 aa).

Residues 1–14 (MDCFKVFEVVFQSE) lie on the Lumenal side of the membrane. Residues 15–37 (INPLLLIPAVATIALTLCCYCYH) form a helical membrane-spanning segment. Topologically, residues 38–88 (GYQWIRDRRTARIEEQQAQLPLPLSRISITPGCSMVATTKLTHSRNSVDIY) are cytoplasmic.

Interacts with 14-3-3zeta. In terms of tissue distribution, expressed in hemocytes.

Its subcellular location is the early endosome membrane. Functionally, negatively regulates early endosome maturation by binding to and repressing the activity of 14-3-3zeta which prevents the 14-3-3zeta-mediated activation of phosphoinositide 3-kinase Pi3K68D. This, in turn, inhibits the Pi3K68D-mediated conversion of phosphatidylinositol to phosphatidylinositol-3-phosphate and prevents progression of early endosomes through the maturation process which regulates subsequent steps of phagocytic processing. This Drosophila melanogaster (Fruit fly) protein is Hemotin.